The chain runs to 168 residues: Photosystem I assembly protein Ycf3 (168 aa).

3 TPR repeats span residues 35 to 68 (AFTYYRDGMSAQSEGNYAEALQNYYEATRLEIDP), 72 to 105 (SYILYNIGLIHTSNGEHTKALEYYFRAIERNPFL), and 120 to 153 (GEQAIRQGDSEIAEAWSDQAAEYWKQAIALTPGN).

Belongs to the Ycf3 family.

It is found in the plastid. It localises to the chloroplast thylakoid membrane. Functionally, essential for the assembly of the photosystem I (PSI) complex. May act as a chaperone-like factor to guide the assembly of the PSI subunits. This Calycanthus floridus var. glaucus (Eastern sweetshrub) protein is Photosystem I assembly protein Ycf3.